The sequence spans 207 residues: Large ribosomal subunit protein uL4 (207 aa).

Residues 49 to 78 (HAVKNRSAVRGGGRKPWRQKGTGRARQGSI) are disordered. Residues 60-71 (GGRKPWRQKGTG) are compositionally biased toward basic residues.

The protein belongs to the universal ribosomal protein uL4 family. In terms of assembly, part of the 50S ribosomal subunit.

One of the primary rRNA binding proteins, this protein initially binds near the 5'-end of the 23S rRNA. It is important during the early stages of 50S assembly. It makes multiple contacts with different domains of the 23S rRNA in the assembled 50S subunit and ribosome. In terms of biological role, forms part of the polypeptide exit tunnel. The protein is Large ribosomal subunit protein uL4 of Enterococcus faecalis (strain ATCC 700802 / V583).